Here is a 263-residue protein sequence, read N- to C-terminus: Tryptophan synthase alpha chain (263 aa).

Residues glutamate 50 and aspartate 61 each act as proton acceptor in the active site.

Belongs to the TrpA family. Tetramer of two alpha and two beta chains.

The enzyme catalyses (1S,2R)-1-C-(indol-3-yl)glycerol 3-phosphate + L-serine = D-glyceraldehyde 3-phosphate + L-tryptophan + H2O. It participates in amino-acid biosynthesis; L-tryptophan biosynthesis; L-tryptophan from chorismate: step 5/5. In terms of biological role, the alpha subunit is responsible for the aldol cleavage of indoleglycerol phosphate to indole and glyceraldehyde 3-phosphate. The chain is Tryptophan synthase alpha chain from Clostridium acetobutylicum (strain ATCC 824 / DSM 792 / JCM 1419 / IAM 19013 / LMG 5710 / NBRC 13948 / NRRL B-527 / VKM B-1787 / 2291 / W).